A 77-amino-acid polypeptide reads, in one-letter code: Defensin-B6 (77 aa).

An N-terminal signal peptide occupies residues 1–20; that stretch reads MKTLFFLSVFIFLLLHLSPG. 3 disulfide bridges follow: C43/C70, C50/C64, and C54/C71.

This sequence belongs to the beta-defensin family. Lowly expressed in spleen, kidney and lung.

It is found in the secreted. In terms of biological role, has antimicrobial activity. The protein is Defensin-B6 of Ornithorhynchus anatinus (Duckbill platypus).